The chain runs to 553 residues: Arginine--tRNA ligase (553 aa).

Positions 130–140 match the 'HIGH' region motif; the sequence is ANPTGDLHIGH.

The protein belongs to the class-I aminoacyl-tRNA synthetase family. In terms of assembly, monomer.

The protein localises to the cytoplasm. The catalysed reaction is tRNA(Arg) + L-arginine + ATP = L-arginyl-tRNA(Arg) + AMP + diphosphate. The sequence is that of Arginine--tRNA ligase from Staphylococcus aureus (strain bovine RF122 / ET3-1).